Reading from the N-terminus, the 99-residue chain is MEIKITEVKENKLIGRKEIYFEIYHPGEPTPSRKDVKGKLVAMLDLNPETTVIQYIRSYFGSYKSKGYAKYYYDKDRMLYIEPEYILIRDGIIEKKEGE.

The protein belongs to the eukaryotic ribosomal protein eS24 family.

The protein is Small ribosomal subunit protein eS24 of Pyrococcus abyssi (strain GE5 / Orsay).